Reading from the N-terminus, the 157-residue chain is ATP synthase subunit b' (157 aa).

Residues Ala22 to Phe42 form a helical membrane-spanning segment.

This sequence belongs to the ATPase B chain family. As to quaternary structure, F-type ATPases have 2 components, F(1) - the catalytic core - and F(0) - the membrane proton channel. F(1) has five subunits: alpha(3), beta(3), gamma(1), delta(1), epsilon(1). F(0) has four main subunits: a(1), b(1), b'(1) and c(10-14). The alpha and beta chains form an alternating ring which encloses part of the gamma chain. F(1) is attached to F(0) by a central stalk formed by the gamma and epsilon chains, while a peripheral stalk is formed by the delta, b and b' chains.

The protein localises to the cellular thylakoid membrane. Its function is as follows. F(1)F(0) ATP synthase produces ATP from ADP in the presence of a proton or sodium gradient. F-type ATPases consist of two structural domains, F(1) containing the extramembraneous catalytic core and F(0) containing the membrane proton channel, linked together by a central stalk and a peripheral stalk. During catalysis, ATP synthesis in the catalytic domain of F(1) is coupled via a rotary mechanism of the central stalk subunits to proton translocation. In terms of biological role, component of the F(0) channel, it forms part of the peripheral stalk, linking F(1) to F(0). The b'-subunit is a diverged and duplicated form of b found in plants and photosynthetic bacteria. The polypeptide is ATP synthase subunit b' (Synechococcus sp. (strain JA-3-3Ab) (Cyanobacteria bacterium Yellowstone A-Prime)).